The chain runs to 675 residues: Myosin-binding protein 3 (675 aa).

Residues 17–37 (ITVILVYAFLEWLLMFFIFLN) form a helical membrane-spanning segment. Disordered regions lie at residues 225–274 (LRSI…EEET) and 286–315 (SKNF…TPTS). The span at 238–251 (AKSRVSEDEQRNDD) shows a compositional bias: basic and acidic residues. One can recognise a GTD-binding domain in the interval 355–453 (RTIERLRETV…QLQRELEVYR (99 aa)). The span at 474-496 (CEADDDDKEEENREEDNSSEMDV) shows a compositional bias: acidic residues. Disordered regions lie at residues 474–497 (CEAD…MDVD), 542–565 (DKES…GHGG), and 582–605 (AENE…GSDS). The segment covering 596–605 (SDEKNFGSDS) has biased composition (basic and acidic residues). Residues 605–633 (SEKLEIIKQVDSVYERLQELETDGEFLKN) are a coiled coil.

Interacts with myosin XI-K.

The protein localises to the membrane. Its function is as follows. Membrane-anchored myosin receptors that define a distinct, plant-specific transport vesicle compartment. This Arabidopsis thaliana (Mouse-ear cress) protein is Myosin-binding protein 3.